Reading from the N-terminus, the 308-residue chain is L-lactate dehydrogenase 2 (308 aa).

NAD(+)-binding positions include valine 13, aspartate 34, arginine 39, tyrosine 64, and 78-79 (GV). Arginine 87 contacts substrate. Residue threonine 100 participates in NAD(+) binding. Residue 119–122 (NPVD) coordinates substrate. Threonine 142 is an NAD(+) binding site. Substrate is bound at residue 147-150 (DSMR). The active-site Proton acceptor is histidine 174. Position 224 (threonine 224) interacts with substrate.

This sequence belongs to the LDH/MDH superfamily. LDH family. As to quaternary structure, homotetramer.

The protein resides in the cytoplasm. It carries out the reaction (S)-lactate + NAD(+) = pyruvate + NADH + H(+). Its pathway is fermentation; pyruvate fermentation to lactate; (S)-lactate from pyruvate: step 1/1. In terms of biological role, catalyzes the conversion of lactate to pyruvate. The chain is L-lactate dehydrogenase 2 from Lactobacillus acidophilus (strain ATCC 700396 / NCK56 / N2 / NCFM).